A 382-amino-acid polypeptide reads, in one-letter code: MKITRLTTYHAAPRWLFLKVETDEGITGWGEPVIEGRARSVEAAVHELAGYVVGKDPARINDLWQTLYRAGFYRGGAILMSAIAGIDQALWDIKGKTLGVPVYELLGGLVRDRMKTYRWVGGDRPGAIIQQITDYRALGFDTFKFNGTEEMKLIDSARAVDAAVVKVAEIREAFGNSIDFGIDFHGRVGAPMAKALLRELEPFKPLFVEEPVLAEQAEYYPRLAASTSIPLAAGERMFSRFEFKNVLCAGGIGMVQPDLSHAGGITECVKIAAMAEAYDVGFAPHCPLGPIALAACLHVDFVSHNAVLQEQSIGIHYNEGADLLDYVINKDDFHCVDGSIAALPKPGLGVEIDEEMLKRTNENPPDWRNPVWRHSDGSIAEW.

Aspartate 183 provides a ligand contact to Mg(2+). Histidine 185 functions as the Proton donor in the catalytic mechanism. Mg(2+) is bound by residues glutamate 209 and glutamate 235. Residue histidine 285 is the Proton acceptor of the active site. The disordered stretch occupies residues 361–382; that stretch reads NENPPDWRNPVWRHSDGSIAEW.

This sequence belongs to the mandelate racemase/muconate lactonizing enzyme family. GalD subfamily. It depends on Mg(2+) as a cofactor.

It carries out the reaction D-galactonate = 2-dehydro-3-deoxy-D-galactonate + H2O. It functions in the pathway carbohydrate acid metabolism; D-galactonate degradation; D-glyceraldehyde 3-phosphate and pyruvate from D-galactonate: step 1/3. Catalyzes the dehydration of D-galactonate to 2-keto-3-deoxy-D-galactonate. The protein is D-galactonate dehydratase of Xanthomonas euvesicatoria pv. vesicatoria (strain 85-10) (Xanthomonas campestris pv. vesicatoria).